A 473-amino-acid chain; its full sequence is O-methyltransferase aclU (473 aa).

S-adenosyl-L-methionine-binding positions include Asp320 and 354–356 (GDF). His373 (proton acceptor) is an active-site residue.

It belongs to the class I-like SAM-binding methyltransferase superfamily. Cation-independent O-methyltransferase family. COMT subfamily.

Its pathway is mycotoxin biosynthesis. In terms of biological role, O-methyltransferase; part of the gene cluster that mediates the biosynthesis of aspirochlorine (or antibiotic A30641), an unusual halogenated spiro compound with distinctive antifungal properties due to selective inhibition of protein biosynthesis, and which is also active against bacteria, viruses, and murine tumor cells. The non-ribosomal peptide synthetase (NRPS) aclP is responsible the formation of the diketopiperazine (DKP) core from the condensation of 2 phenylalanine residues. One Phe residue is tailored into chlorotyrosine by hydroxylation and chlorination, whereas the second Phe undergoes an unprecedented C-C bond cleavage to be converted into glycine. After formation of the DKP, sulfur is incorporated into the DKP by conjugation with glutathione by aclG, followed by its stepwise degradation to the thiol by aclI, aclJ and aclK, and the dithiol oxidation by aclT. In addition, oxygenases (aclB, aclC, aclL and aclO) and O-methyltransferases (aclM and aclU) act as tailoring enzymes to produce the intermediate dechloroaspirochlorine. Ultimately, chlorination of dechloroaspirochlorine by the halogenase aclH is the last step in the aspirochlorine pathway. The chain is O-methyltransferase aclU from Aspergillus oryzae (strain ATCC 42149 / RIB 40) (Yellow koji mold).